We begin with the raw amino-acid sequence, 174 residues long: 3-hydroxydecanoyl-[acyl-carrier-protein] dehydratase (174 aa).

Residue His-73 is part of the active site.

Belongs to the thioester dehydratase family. FabA subfamily. Homodimer.

The protein localises to the cytoplasm. The enzyme catalyses a (3R)-hydroxyacyl-[ACP] = a (2E)-enoyl-[ACP] + H2O. The catalysed reaction is (3R)-hydroxydecanoyl-[ACP] = (2E)-decenoyl-[ACP] + H2O. It catalyses the reaction (2E)-decenoyl-[ACP] = (3Z)-decenoyl-[ACP]. It participates in lipid metabolism; fatty acid biosynthesis. Its function is as follows. Necessary for the introduction of cis unsaturation into fatty acids. Catalyzes the dehydration of (3R)-3-hydroxydecanoyl-ACP to E-(2)-decenoyl-ACP and then its isomerization to Z-(3)-decenoyl-ACP. Can catalyze the dehydratase reaction for beta-hydroxyacyl-ACPs with saturated chain lengths up to 16:0, being most active on intermediate chain length. The sequence is that of 3-hydroxydecanoyl-[acyl-carrier-protein] dehydratase from Saccharophagus degradans (strain 2-40 / ATCC 43961 / DSM 17024).